The chain runs to 252 residues: Indole-3-glycerol phosphate synthase (252 aa).

The protein belongs to the TrpC family.

The catalysed reaction is 1-(2-carboxyphenylamino)-1-deoxy-D-ribulose 5-phosphate + H(+) = (1S,2R)-1-C-(indol-3-yl)glycerol 3-phosphate + CO2 + H2O. It participates in amino-acid biosynthesis; L-tryptophan biosynthesis; L-tryptophan from chorismate: step 4/5. This chain is Indole-3-glycerol phosphate synthase, found in Listeria monocytogenes serovar 1/2a (strain ATCC BAA-679 / EGD-e).